The sequence spans 215 residues: MKLYQKFPETQVITTKGPLDFYRDVFEKGKWLFLFAHPADFTPVCTTEFVGFSKVYEEFKRLNVELVGMSVDSIYSHIEWLKDIQERYGIQVPFPLIADPDKRLARLLDIIDEASGVTIRAVFLVNPEGIIRFMAYYPIEYGRKIEELLRITKAALVNYKAKVSLPVDWEPGQEVIVPAPSTIDEAQIRMKLPNAKTWYLTFKKYDELPQDQRVV.

One can recognise a Thioredoxin domain in the interval methionine 1 to valine 157. Cysteine 45 (cysteine sulfenic acid (-SOH) intermediate) is an active-site residue. Position 120 (arginine 120) interacts with substrate.

This sequence belongs to the peroxiredoxin family. Prx6 subfamily. Homodecamer. Pentamer of dimers that assemble into a ring structure.

The protein localises to the cytoplasm. It catalyses the reaction a hydroperoxide + [thioredoxin]-dithiol = an alcohol + [thioredoxin]-disulfide + H2O. Thiol-specific peroxidase that catalyzes the reduction of hydrogen peroxide and organic hydroperoxides to water and alcohols, respectively. Plays a role in cell protection against oxidative stress by detoxifying peroxides. The polypeptide is Peroxiredoxin 1 (Sulfuracidifex metallicus (Sulfolobus metallicus)).